Reading from the N-terminus, the 101-residue chain is Small ribosomal subunit protein bS18c (101 aa).

The protein belongs to the bacterial ribosomal protein bS18 family. In terms of assembly, part of the 30S ribosomal subunit.

It localises to the plastid. The protein resides in the chloroplast. The chain is Small ribosomal subunit protein bS18c from Lepidium virginicum (Virginia pepperweed).